Here is a 103-residue protein sequence, read N- to C-terminus: Serine rich endogenous peptide 9 (103 aa).

A signal peptide spans M1–T25. The segment at I54–P103 is disordered. Positions K62–T75 are enriched in basic and acidic residues. The SCOOP motif motif lies at E82 to S96. The span at G84–P103 shows a compositional bias: low complexity. Residues S88–S90 carry the SxS motif essential for MIK2 binding motif.

Belongs to the serine rich endogenous peptide (SCOOP) phytocytokine family. In terms of assembly, interacts with MIK2 (via extracellular leucine-rich repeat domain); this interaction triggers the formation of complex between MIK2 and the BAK1/SERK3 and SERK4 coreceptors, and subsequent BAK1 activation by phosphorylation. Mostly expressed in seedlings shoots and roots, and, to a lower extent, in leaves, but barely in flowers.

The protein localises to the cell membrane. The protein resides in the secreted. It is found in the extracellular space. Its subcellular location is the apoplast. Its function is as follows. Brassicaceae-specific phytocytokine (plant endogenous peptide released into the apoplast) perceived by MIK2 in a BAK1/SERK3 and SERK4 coreceptors-dependent manner, that modulates various physiological and antimicrobial processes including growth prevention and reactive oxygen species (ROS) response regulation. This chain is Serine rich endogenous peptide 9, found in Arabidopsis thaliana (Mouse-ear cress).